The following is a 365-amino-acid chain: Chorismate synthase (365 aa).

An NADP(+)-binding site is contributed by Arg48. Residues 125 to 127 (RSS), 238 to 239 (NA), Gly278, 293 to 297 (KPTSS), and Arg319 contribute to the FMN site.

This sequence belongs to the chorismate synthase family. Homotetramer. The cofactor is FMNH2.

It carries out the reaction 5-O-(1-carboxyvinyl)-3-phosphoshikimate = chorismate + phosphate. Its pathway is metabolic intermediate biosynthesis; chorismate biosynthesis; chorismate from D-erythrose 4-phosphate and phosphoenolpyruvate: step 7/7. Catalyzes the anti-1,4-elimination of the C-3 phosphate and the C-6 proR hydrogen from 5-enolpyruvylshikimate-3-phosphate (EPSP) to yield chorismate, which is the branch point compound that serves as the starting substrate for the three terminal pathways of aromatic amino acid biosynthesis. This reaction introduces a second double bond into the aromatic ring system. The sequence is that of Chorismate synthase from Marinomonas sp. (strain MWYL1).